The primary structure comprises 91 residues: Acylphosphatase (91 aa).

The 89-residue stretch at 3–91 folds into the Acylphosphatase-like domain; that stretch reads CLKAVVKGKV…GNYGDFHIKY (89 aa). Catalysis depends on residues Arg-18 and Asn-36.

This sequence belongs to the acylphosphatase family.

It carries out the reaction an acyl phosphate + H2O = a carboxylate + phosphate + H(+). In Dehalococcoides mccartyi (strain ATCC BAA-2266 / KCTC 15142 / 195) (Dehalococcoides ethenogenes (strain 195)), this protein is Acylphosphatase (acyP).